Here is a 345-residue protein sequence, read N- to C-terminus: Beta-hexosaminidase (345 aa).

Residues D60, R68, R132, and 162–163 contribute to the substrate site; that span reads KH. The active-site Proton donor/acceptor is H175. D247 serves as the catalytic Nucleophile.

The protein belongs to the glycosyl hydrolase 3 family. NagZ subfamily.

The protein resides in the cytoplasm. It catalyses the reaction Hydrolysis of terminal non-reducing N-acetyl-D-hexosamine residues in N-acetyl-beta-D-hexosaminides.. The protein operates within cell wall biogenesis; peptidoglycan recycling. Its function is as follows. Plays a role in peptidoglycan recycling by cleaving the terminal beta-1,4-linked N-acetylglucosamine (GlcNAc) from peptide-linked peptidoglycan fragments, giving rise to free GlcNAc, anhydro-N-acetylmuramic acid and anhydro-N-acetylmuramic acid-linked peptides. In Actinobacillus pleuropneumoniae serotype 3 (strain JL03), this protein is Beta-hexosaminidase.